Consider the following 194-residue polypeptide: Ion-translocating oxidoreductase complex subunit B (194 aa).

The interval 1–26 (MSSILIAVIAIAALALVFGLILGFAS) is hydrophobic. Residues 32 to 90 (ESDPIVEQIDAILPQTQCGQCGYPGCKPYAEAIANGDMINKCPPGGQATIEKLADLMGV) form the 4Fe-4S domain. Residues cysteine 49, cysteine 52, cysteine 57, cysteine 73, cysteine 114, cysteine 117, cysteine 120, cysteine 124, cysteine 144, cysteine 147, cysteine 150, and cysteine 154 each contribute to the [4Fe-4S] cluster site. 4Fe-4S ferredoxin-type domains follow at residues 105 to 134 (KVAFIHEDMCIGCTKCIQACPVDAIVGGTK) and 135 to 164 (ALHTVIESECTGCDLCVAPCPTDCIEMIPV).

This sequence belongs to the 4Fe4S bacterial-type ferredoxin family. RnfB subfamily. As to quaternary structure, the complex is composed of six subunits: RnfA, RnfB, RnfC, RnfD, RnfE and RnfG. Requires [4Fe-4S] cluster as cofactor.

Its subcellular location is the cell inner membrane. Functionally, part of a membrane-bound complex that couples electron transfer with translocation of ions across the membrane. This is Ion-translocating oxidoreductase complex subunit B from Aliivibrio fischeri (strain ATCC 700601 / ES114) (Vibrio fischeri).